Consider the following 102-residue polypeptide: Small ribosomal subunit protein uS10 (102 aa).

This sequence belongs to the universal ribosomal protein uS10 family. Part of the 30S ribosomal subunit.

In terms of biological role, involved in the binding of tRNA to the ribosomes. This chain is Small ribosomal subunit protein uS10, found in Shouchella clausii (strain KSM-K16) (Alkalihalobacillus clausii).